The following is a 492-amino-acid chain: Cytoplasmic dynein 1 light intermediate chain 2 (492 aa).

Gly61–Thr68 contacts ATP. Disordered stretches follow at residues Pro187 to Asp206, Ala371 to Ala423, and Leu437 to Ala492. Position 194 is a phosphoserine (Ser194). The span at Ala371–Ser381 shows a compositional bias: polar residues. 2 positions are modified to phosphoserine: Ser383 and Ser391. Arg397 carries the post-translational modification Omega-N-methylarginine. The span at Pro400–Val412 shows a compositional bias: low complexity. Thr441 is subject to Phosphothreonine. Phosphoserine is present on residues Ser443 and Ser446. The segment covering Val452–Gln469 has biased composition (polar residues). Residues Glu471–Asp480 show a composition bias toward basic and acidic residues. Residues Met482–Ala492 show a composition bias toward polar residues.

The protein belongs to the dynein light intermediate chain family. In terms of assembly, homodimer. The cytoplasmic dynein 1 complex consists of two catalytic heavy chains (HCs) and a number of non-catalytic subunits presented by intermediate chains (ICs), light intermediate chains (LICs) and light chains (LCs); the composition seems to vary in respect to the IC, LIC and LC composition. The heavy chain homodimer serves as a scaffold for the probable homodimeric assembly of the respective non-catalytic subunits. The ICs and LICs bind directly to the HC dimer and the LCs assemble on the IC dimer. Interacts with DYNC1H1; DYNC1LI1 and DYNC1LI2 bind mutually exclusive to DYNC1H.

Its subcellular location is the cytoplasm. It localises to the cytoskeleton. Its function is as follows. Acts as one of several non-catalytic accessory components of the cytoplasmic dynein 1 complex that are thought to be involved in linking dynein to cargos and to adapter proteins that regulate dynein function. Cytoplasmic dynein 1 acts as a motor for the intracellular retrograde motility of vesicles and organelles along microtubules. May play a role in binding dynein to membranous organelles or chromosomes. This is Cytoplasmic dynein 1 light intermediate chain 2 from Homo sapiens (Human).